A 212-amino-acid chain; its full sequence is Phosphatidylserine decarboxylase proenzyme (212 aa).

The active-site Schiff-base intermediate with substrate; via pyruvic acid is Ser-182. Residue Ser-182 is modified to Pyruvic acid (Ser); by autocatalysis.

Belongs to the phosphatidylserine decarboxylase family. PSD-A subfamily. As to quaternary structure, heterodimer of a large membrane-associated beta subunit and a small pyruvoyl-containing alpha subunit. Pyruvate is required as a cofactor. In terms of processing, is synthesized initially as an inactive proenzyme. Formation of the active enzyme involves a self-maturation process in which the active site pyruvoyl group is generated from an internal serine residue via an autocatalytic post-translational modification. Two non-identical subunits are generated from the proenzyme in this reaction, and the pyruvate is formed at the N-terminus of the alpha chain, which is derived from the carboxyl end of the proenzyme. The post-translation cleavage follows an unusual pathway, termed non-hydrolytic serinolysis, in which the side chain hydroxyl group of the serine supplies its oxygen atom to form the C-terminus of the beta chain, while the remainder of the serine residue undergoes an oxidative deamination to produce ammonia and the pyruvoyl prosthetic group on the alpha chain.

Its subcellular location is the cell membrane. The enzyme catalyses a 1,2-diacyl-sn-glycero-3-phospho-L-serine + H(+) = a 1,2-diacyl-sn-glycero-3-phosphoethanolamine + CO2. The protein operates within phospholipid metabolism; phosphatidylethanolamine biosynthesis; phosphatidylethanolamine from CDP-diacylglycerol: step 2/2. Its function is as follows. Catalyzes the formation of phosphatidylethanolamine (PtdEtn) from phosphatidylserine (PtdSer). The sequence is that of Phosphatidylserine decarboxylase proenzyme from Chlorobium limicola (strain DSM 245 / NBRC 103803 / 6330).